The chain runs to 189 residues: Peptidyl-tRNA hydrolase (189 aa).

Residue Y15 coordinates tRNA. H20 acts as the Proton acceptor in catalysis. TRNA contacts are provided by F66, N68, and N114.

It belongs to the PTH family. Monomer.

It is found in the cytoplasm. The catalysed reaction is an N-acyl-L-alpha-aminoacyl-tRNA + H2O = an N-acyl-L-amino acid + a tRNA + H(+). Functionally, hydrolyzes ribosome-free peptidyl-tRNAs (with 1 or more amino acids incorporated), which drop off the ribosome during protein synthesis, or as a result of ribosome stalling. Catalyzes the release of premature peptidyl moieties from peptidyl-tRNA molecules trapped in stalled 50S ribosomal subunits, and thus maintains levels of free tRNAs and 50S ribosomes. This Streptococcus pneumoniae (strain JJA) protein is Peptidyl-tRNA hydrolase.